The primary structure comprises 395 residues: Xylose isomerase (395 aa).

Catalysis depends on residues His54 and Glu57. Positions 80–108 (AVPAGAGRDRHEGADGDDEPVHAPGCSRD) are disordered. Mg(2+)-binding residues include Glu189, Glu225, His228, Asp253, Asp263, Asp265, and Asp295.

It belongs to the xylose isomerase family. In terms of assembly, homotetramer. Mg(2+) serves as cofactor.

It is found in the cytoplasm. The catalysed reaction is alpha-D-xylose = alpha-D-xylulofuranose. This is Xylose isomerase from Streptomyces lividans.